A 542-amino-acid chain; its full sequence is Protein lin-9 homolog (542 aa).

Ala2 carries the post-translational modification N-acetylalanine. Residues 2–296 are sufficient for interaction with RB1; the sequence is AELDQLPDES…QKQRPSRFFM (295 aa). Lys21 is covalently cross-linked (Glycyl lysine isopeptide (Lys-Gly) (interchain with G-Cter in SUMO2)). Phosphoserine is present on residues Ser65 and Ser95. Thr96 and Thr304 each carry phosphothreonine. Phosphoserine occurs at positions 309 and 321. Residues 354–413 are a coiled coil; that stretch reads MIKKEHIKKLREMNTEAEKLKSYSMPISIEFQRRYATIVLELEQLNKDLNKVLHKVQQYC.

It belongs to the lin-9 family. Component of the DREAM complex (also named LINC complex) at least composed of E2F4, E2F5, LIN9, LIN37, LIN52, LIN54, MYBL1, MYBL2, RBL1, RBL2, RBBP4, TFDP1 and TFDP2. The complex exists in quiescent cells where it represses cell cycle-dependent genes. It dissociates in S phase when LIN9, LIN37, LIN52 and LIN54 form a subcomplex that binds to MYBL2. Interacts with RB1. Expressed in thymus and testis.

It localises to the nucleus. It is found in the nucleoplasm. In terms of biological role, acts as a tumor suppressor. Inhibits DNA synthesis. Its ability to inhibit oncogenic transformation is mediated through its association with RB1. Plays a role in the expression of genes required for the G1/S transition. This is Protein lin-9 homolog (LIN9) from Homo sapiens (Human).